The following is a 301-amino-acid chain: Sulfate adenylyltransferase subunit 2 (301 aa).

The segment at 279 to 301 (RQGRMIDHDSSGSMEEKKKQGYF) is disordered.

This sequence belongs to the PAPS reductase family. CysD subfamily. As to quaternary structure, heterodimer composed of CysD, the smaller subunit, and CysN.

It carries out the reaction sulfate + ATP + H(+) = adenosine 5'-phosphosulfate + diphosphate. The protein operates within sulfur metabolism; hydrogen sulfide biosynthesis; sulfite from sulfate: step 1/3. Functionally, with CysN forms the ATP sulfurylase (ATPS) that catalyzes the adenylation of sulfate producing adenosine 5'-phosphosulfate (APS) and diphosphate, the first enzymatic step in sulfur assimilation pathway. APS synthesis involves the formation of a high-energy phosphoric-sulfuric acid anhydride bond driven by GTP hydrolysis by CysN coupled to ATP hydrolysis by CysD. This Marinomonas sp. (strain MWYL1) protein is Sulfate adenylyltransferase subunit 2.